The sequence spans 91 residues: Late embryogenesis abundant protein EMB564 (91 aa).

2 stretches are compositionally biased toward basic and acidic residues: residues 1 to 19 (MASG…REGE) and 32 to 51 (EAQE…RREQ). The disordered stretch occupies residues 1-91 (MASGQESRKE…VTIDESKFTK (91 aa)).

It belongs to the small hydrophilic plant seed protein family.

Functionally, LEA proteins are late embryonic proteins abundant in higher plant seed embryos. They may play an essential role in seed survival and in controlling water exchanges during seed desiccation and imbibition. The sequence is that of Late embryogenesis abundant protein EMB564 from Zea mays (Maize).